The chain runs to 783 residues: Heat shock transcription factor (783 aa).

A disordered region spans residues 1–59 (MTTNLYAIAGPSKPTTPTSTPSPRSEPPSPLKSLTSLPTNPLNSHGTSTPNTLTNQLSS). Low complexity-rich tracts occupy residues 11-23 (PSKPTTPTSTPSP) and 31-42 (LKSLTSLPTNPL). The segment covering 43–59 (NSHGTSTPNTLTNQLSS) has biased composition (polar residues). A DNA-binding region spans residues 78 to 168 (MKVPAFLNKL…PIELWEFANP (91 aa)). The tract at residues 181-262 (VTRKNNRPSN…PGSVPPSHTS (82 aa)) is disordered. Composition is skewed to low complexity over residues 189 to 199 (SNSGVGPSSSV) and 209 to 233 (STRSASAAAASGSASGQIQQAISQG). The segment covering 238-262 (NHSTSGKYLITDGTTPGSVPPSHTS) has biased composition (polar residues). Residues 280 to 333 (GIAAIRQTQASIATDLRKLQASNEALWRQAYETQEKQRKHEETIDLIVSFLERL) form an involved in trimerization region. 2 stretches are compositionally biased toward basic and acidic residues: residues 350-372 (RGVGVRRDRDGREGRDSRDSRFA) and 399-415 (TGEHGEIESPTSDDRLV). Disordered regions lie at residues 350 to 554 (RGVG…LLSP), 599 to 652 (QALA…TLAL), and 736 to 783 (QGLA…KSES). Residues 418-448 (GSNSEYSIPSVKRTSSSSHPISLGQLGSSRF) are compositionally biased toward polar residues. Low complexity-rich tracts occupy residues 452 to 467 (PSEDPSPSASGPGSTS), 497 to 511 (LSPLSDTDPLLPSSS), 522 to 550 (PFPSSNSNQSNSFNPSNPSSAWASNPSQP), and 616 to 632 (NPNGNASTSASASAHGM). Positions 742 to 752 (GEEEGEREVEG) are enriched in acidic residues. Positions 753–765 (DGGVSSSGAGAGA) are enriched in gly residues.

Belongs to the HSF family. Homotrimer. Homotrimerization increases the affinity of HSF1 to DNA. Interacts with transcriptional coregulator SSA1 on chromatin.

It is found in the nucleus. Its function is as follows. DNA-binding transcription factor that specifically binds heat shock promoter elements (HSE) and activates transcription. Together with its coregulator SSA1, activates expression of laccase LAC1 during glucose starvation. The protein is Heat shock transcription factor of Cryptococcus neoformans var. neoformans serotype D (strain JEC21 / ATCC MYA-565) (Filobasidiella neoformans).